We begin with the raw amino-acid sequence, 315 residues long: Cyclin-dependent kinase B2-2 (315 aa).

Positions 16 to 306 (FEKLEKVGEG…AKKAMEHPYF (291 aa)) constitute a Protein kinase domain. Residues 22–30 (VGEGTYGKV) and Lys-45 contribute to the ATP site. Tyr-27 bears the Phosphotyrosine mark. The active-site Proton acceptor is the Asp-147. Residue Thr-181 is modified to Phosphothreonine.

It belongs to the protein kinase superfamily. CMGC Ser/Thr protein kinase family. CDC2/CDKX subfamily. In terms of tissue distribution, expressed in flowers.

The enzyme catalyses L-seryl-[protein] + ATP = O-phospho-L-seryl-[protein] + ADP + H(+). It carries out the reaction L-threonyl-[protein] + ATP = O-phospho-L-threonyl-[protein] + ADP + H(+). It catalyses the reaction [DNA-directed RNA polymerase] + ATP = phospho-[DNA-directed RNA polymerase] + ADP + H(+). The protein is Cyclin-dependent kinase B2-2 (CDKB2-2) of Arabidopsis thaliana (Mouse-ear cress).